The sequence spans 86 residues: Serine protease inhibitor Kazal-type 4 (86 aa).

The first 26 residues, 1–26, serve as a signal peptide directing secretion; the sequence is MAMHLWLVTLTLVPLLGMDRELMVSA. The 56-residue stretch at 31–86 folds into the Kazal-like domain; it reads FPRMPFCEHMAELPNCPQTPNLICGTDGLTYENECHLCLTRMKTMKDIQIMKDGQC. Intrachain disulfides connect cysteine 37–cysteine 68, cysteine 46–cysteine 65, and cysteine 54–cysteine 86.

As to expression, expressed in the intestinal tract.

Its subcellular location is the secreted. The sequence is that of Serine protease inhibitor Kazal-type 4 (Spink4) from Mus musculus (Mouse).